The chain runs to 389 residues: Acetyl-CoA decarbonylase/synthase complex subunit delta (389 aa).

Belongs to the CdhD family. As to quaternary structure, heterodimer of delta and gamma chains. The ACDS complex is made up of alpha, epsilon, beta, gamma and delta chains with a probable stoichiometry of (alpha(2)epsilon(2))(4)-beta(8)-(gamma(1)delta(1))(8).

In terms of biological role, part of a complex that catalyzes the reversible cleavage of acetyl-CoA, allowing autotrophic growth from CO(2). Probably maintains the overall quaternary structure of the ACDS complex. The sequence is that of Acetyl-CoA decarbonylase/synthase complex subunit delta from Methanothermobacter thermautotrophicus (strain ATCC 29096 / DSM 1053 / JCM 10044 / NBRC 100330 / Delta H) (Methanobacterium thermoautotrophicum).